A 682-amino-acid chain; its full sequence is Probable methyltransferase PMT12 (682 aa).

At 1-11 the chain is on the cytoplasmic side; it reads MKLFLNSNLLR. The chain crosses the membrane as a helical; Signal-anchor for type II membrane protein span at residues 12–32; sequence NSIFFKISAFVLISVACFFLG. At 33-682 the chain is on the lumenal side; it reads KHWSEDGFRR…KRRKTKGKRA (650 aa). Residues Asn67, Asn103, Asn125, Asn155, Asn173, Asn193, Asn273, Asn350, Asn395, Asn419, Asn600, and Asn625 are each glycosylated (N-linked (GlcNAc...) asparagine).

Belongs to the methyltransferase superfamily.

The protein localises to the golgi apparatus membrane. This Arabidopsis thaliana (Mouse-ear cress) protein is Probable methyltransferase PMT12.